We begin with the raw amino-acid sequence, 427 residues long: Peptidyl-prolyl cis-trans isomerase sig-7 (427 aa).

The 156-residue stretch at 6–161 (ETTLGDLIID…KDIRISHTIV (156 aa)) folds into the PPIase cyclophilin-type domain. The stretch at 195–227 (DEKEDEDEGKTAEEIAEELQQREMAEQAQILEM) forms a coiled coil. Residues 241–319 (NVLFVCKLNP…RRIHVDFSQS (79 aa)) form the RRM domain. Positions 322–334 (QNYKYKPKSQQQE) are enriched in polar residues. Positions 322-427 (QNYKYKPKSQ…RSPDRRRDRR (106 aa)) are disordered. Basic residues predominate over residues 351 to 370 (SHQRSPSPRRRRSPSPKKDK). Positions 384-427 (SSDNHRDRDRSYRDNNRDRRDNHRDSDRDRRRHDRSPDRRRDRR) are enriched in basic and acidic residues.

The protein belongs to the cyclophilin-type PPIase family. PPIL4 subfamily. In terms of assembly, interacts with ama-1, the catalytic subunit of the RNA polymerase II (RNA pol II) complex. Ubiquitous.

The protein localises to the nucleus. It localises to the nucleoplasm. Its subcellular location is the chromosome. It carries out the reaction [protein]-peptidylproline (omega=180) = [protein]-peptidylproline (omega=0). Probable PPIase that accelerates the folding of proteins. It catalyzes the cis-trans isomerization of proline imidic peptide bonds in oligopeptides. Involved in RNA polymerase II (RNA pol II)-mediated transcription elongation, and in primary transcript splicing, including co-transcriptional trans-splicing, in association with the catalytic subunit of the RNA pol II complex ama-1. Also plays a role in the regulation of elongation-dependent phosphorylation of ama-1 to control transcription. Involved in the transcription of several genes during embryogenesis and in particular, of genes related to developmental processes such as gastrulation, and also regulates transcription in germ cells from embryogenesis to adulthood. In Caenorhabditis elegans, this protein is Peptidyl-prolyl cis-trans isomerase sig-7.